The chain runs to 413 residues: Argininosuccinate synthase (413 aa).

ATP contacts are provided by residues 14–22 (AYSGGLDTS) and A41. Y94 and S99 together coordinate L-citrulline. An ATP-binding site is contributed by G124. Positions 126, 130, and 131 each coordinate L-aspartate. N130 contributes to the L-citrulline binding site. L-citrulline contacts are provided by R134, S185, S194, E270, and Y282.

This sequence belongs to the argininosuccinate synthase family. Type 1 subfamily. Homotetramer.

The protein resides in the cytoplasm. It carries out the reaction L-citrulline + L-aspartate + ATP = 2-(N(omega)-L-arginino)succinate + AMP + diphosphate + H(+). It participates in amino-acid biosynthesis; L-arginine biosynthesis; L-arginine from L-ornithine and carbamoyl phosphate: step 2/3. The polypeptide is Argininosuccinate synthase (Hyphomonas neptunium (strain ATCC 15444)).